We begin with the raw amino-acid sequence, 531 residues long: Polyamine aminopropyltransferase 1 (531 aa).

The next 7 membrane-spanning stretches (helical) occupy residues 27–47, 59–79, 96–116, 122–142, 160–180, 188–208, and 218–238; these read FLLL…ELAL, VLQT…GSLA, GVLA…FAWL, AMIV…PLLM, MFAV…LFLL, GALV…VFIF, and AGLL…YVLA. The tract at residues 205–476 is spermidine synthase; the sequence is VFIFRRQTGR…VLARPGTEAP (272 aa). Positions 233–471 constitute a PABS domain; the sequence is TTYVLADDLE…GNWGFVLARP (239 aa). Glutamine 263 serves as a coordination point for S-methyl-5'-thioadenosine. Histidine 298 and aspartate 320 together coordinate spermidine. S-methyl-5'-thioadenosine-binding positions include glutamate 340 and 374–375; that span reads DA. Aspartate 392 serves as the catalytic Proton acceptor.

The protein belongs to the spermidine/spermine synthase family. In terms of assembly, homodimer or homotetramer.

It localises to the cell membrane. It carries out the reaction S-adenosyl 3-(methylsulfanyl)propylamine + putrescine = S-methyl-5'-thioadenosine + spermidine + H(+). The protein operates within amine and polyamine biosynthesis; spermidine biosynthesis; spermidine from putrescine: step 1/1. Its function is as follows. Catalyzes the irreversible transfer of a propylamine group from the amino donor S-adenosylmethioninamine (decarboxy-AdoMet) to putrescine (1,4-diaminobutane) to yield spermidine. The sequence is that of Polyamine aminopropyltransferase 1 from Streptomyces coelicolor (strain ATCC BAA-471 / A3(2) / M145).